A 459-amino-acid polypeptide reads, in one-letter code: Cysteine--tRNA ligase (459 aa).

Cys28 is a Zn(2+) binding site. Positions 30–40 (VTVYDLCHFGH) match the 'HIGH' region motif. Zn(2+) is bound by residues Cys209, His234, and Glu238. Positions 266 to 270 (KMSKS) match the 'KMSKS' region motif. An ATP-binding site is contributed by Lys269.

Belongs to the class-I aminoacyl-tRNA synthetase family. As to quaternary structure, monomer. Zn(2+) is required as a cofactor.

It localises to the cytoplasm. The enzyme catalyses tRNA(Cys) + L-cysteine + ATP = L-cysteinyl-tRNA(Cys) + AMP + diphosphate. The protein is Cysteine--tRNA ligase of Actinobacillus pleuropneumoniae serotype 3 (strain JL03).